We begin with the raw amino-acid sequence, 221 residues long: Histone H1.3 (221 aa).

The span at 1–17 (MSETAPAAPAAPAPVEK) shows a compositional bias: low complexity. The segment at 1–42 (MSETAPAAPAAPAPVEKTPVKKKAKKTGAAAGKRKASGPPVS) is disordered. An N-acetylserine modification is found at Ser2. Ser2 carries the post-translational modification Phosphoserine. Lys17 carries the post-translational modification N6-acetyllysine. The residue at position 18 (Thr18) is a Phosphothreonine. The span at 20–36 (VKKKAKKTGAAAGKRKA) shows a compositional bias: basic residues. N6-(beta-hydroxybutyryl)lysine occurs at positions 33, 35, and 53. In terms of domain architecture, H15 spans 37–110 (SGPPVSELIT…GASGSFKLNK (74 aa)). Arg55 is subject to Citrulline. Residues Lys65, Lys86, and Lys91 each carry the N6-(beta-hydroxybutyryl)lysine modification. A disordered region spans residues 92–221 (GTLVQTKGTG…KAKKAAPRKK (130 aa)). Ser105 carries the post-translational modification Phosphoserine; by PKC. Residues Lys107 and Lys141 each carry the N6-(beta-hydroxybutyryl)lysine modification. 4 stretches are compositionally biased toward basic residues: residues 120–141 (KAKK…KPKK), 150–161 (KTAKKTPKKAKK), 170–187 (KVSK…KKAA), and 194–221 (KAPK…PRKK).

It belongs to the histone H1/H5 family. In terms of processing, H1 histones are progressively phosphorylated during the cell cycle, becoming maximally phosphorylated during late G2 phase and M phase, and being dephosphorylated sharply thereafter. Post-translationally, hydroxybutyrylation of histones is induced by starvation. Citrullination at Arg-55 (H1R54ci) by PADI4 takes place within the DNA-binding site of H1 and results in its displacement from chromatin and global chromatin decondensation, thereby promoting pluripotency and stem cell maintenance.

The protein localises to the nucleus. Its subcellular location is the chromosome. Histone H1 protein binds to linker DNA between nucleosomes forming the macromolecular structure known as the chromatin fiber. Histones H1 are necessary for the condensation of nucleosome chains into higher-order structured fibers. Also acts as a regulator of individual gene transcription through chromatin remodeling, nucleosome spacing and DNA methylation. The chain is Histone H1.3 from Mus musculus (Mouse).